A 92-amino-acid chain; its full sequence is Isoleucine--tRNA ligase (92 aa).

Zn(2+) contacts are provided by cysteine 55, cysteine 58, cysteine 75, and cysteine 78.

This sequence belongs to the class-I aminoacyl-tRNA synthetase family. IleS type 1 subfamily. As to quaternary structure, monomer. It depends on Zn(2+) as a cofactor.

The protein localises to the cytoplasm. It catalyses the reaction tRNA(Ile) + L-isoleucine + ATP = L-isoleucyl-tRNA(Ile) + AMP + diphosphate. In terms of biological role, catalyzes the attachment of isoleucine to tRNA(Ile). As IleRS can inadvertently accommodate and process structurally similar amino acids such as valine, to avoid such errors it has two additional distinct tRNA(Ile)-dependent editing activities. One activity is designated as 'pretransfer' editing and involves the hydrolysis of activated Val-AMP. The other activity is designated 'posttransfer' editing and involves deacylation of mischarged Val-tRNA(Ile). The chain is Isoleucine--tRNA ligase (ileS) from Klebsiella aerogenes (Enterobacter aerogenes).